The chain runs to 146 residues: 3-dehydroquinate dehydratase (146 aa).

The active-site Proton acceptor is the Tyr24. Residues Asn75, His81, and Asp88 each contribute to the substrate site. The Proton donor role is filled by His101. Substrate contacts are provided by residues 102–103 and Arg112; that span reads LS.

This sequence belongs to the type-II 3-dehydroquinase family. In terms of assembly, homododecamer.

The enzyme catalyses 3-dehydroquinate = 3-dehydroshikimate + H2O. The protein operates within metabolic intermediate biosynthesis; chorismate biosynthesis; chorismate from D-erythrose 4-phosphate and phosphoenolpyruvate: step 3/7. Functionally, catalyzes a trans-dehydration via an enolate intermediate. This is 3-dehydroquinate dehydratase from Maricaulis maris (strain MCS10) (Caulobacter maris).